A 392-amino-acid chain; its full sequence is Imidazolonepropionase (392 aa).

Fe(3+)-binding residues include H69 and H71. Residues H69 and H71 each coordinate Zn(2+). 4-imidazolone-5-propanoate is bound by residues R78, Y136, and H163. Residue Y136 coordinates N-formimidoyl-L-glutamate. Residue H226 participates in Fe(3+) binding. H226 lines the Zn(2+) pocket. Residue Q229 coordinates 4-imidazolone-5-propanoate. Position 302 (D302) interacts with Fe(3+). Residue D302 participates in Zn(2+) binding. N-formimidoyl-L-glutamate-binding residues include N304 and G306. S307 is a binding site for 4-imidazolone-5-propanoate.

Belongs to the metallo-dependent hydrolases superfamily. HutI family. It depends on Zn(2+) as a cofactor. Fe(3+) serves as cofactor.

Its subcellular location is the cytoplasm. It carries out the reaction 4-imidazolone-5-propanoate + H2O = N-formimidoyl-L-glutamate. It participates in amino-acid degradation; L-histidine degradation into L-glutamate; N-formimidoyl-L-glutamate from L-histidine: step 3/3. Catalyzes the hydrolytic cleavage of the carbon-nitrogen bond in imidazolone-5-propanoate to yield N-formimidoyl-L-glutamate. It is the third step in the universal histidine degradation pathway. The chain is Imidazolonepropionase from Salinispora arenicola (strain CNS-205).